A 246-amino-acid polypeptide reads, in one-letter code: UDP-N-acetyl-D-mannosaminuronic acid transferase (246 aa).

This sequence belongs to the glycosyltransferase 26 family.

The enzyme catalyses UDP-N-acetyl-alpha-D-mannosaminouronate + N-acetyl-alpha-D-glucosaminyl-di-trans,octa-cis-undecaprenyl diphosphate = beta-D-ManNAcA-(1-&gt;4)-alpha-D-GlcNAc-di-trans,octa-cis-undecaprenyl diphosphate + UDP + H(+). The protein operates within bacterial outer membrane biogenesis; enterobacterial common antigen biosynthesis. In terms of biological role, catalyzes the synthesis of Und-PP-GlcNAc-ManNAcA (Lipid II), the second lipid-linked intermediate involved in enterobacterial common antigen (ECA) synthesis. The sequence is that of UDP-N-acetyl-D-mannosaminuronic acid transferase from Salmonella schwarzengrund (strain CVM19633).